The sequence spans 338 residues: Sulfotransferase 2B1 (338 aa).

Residue 67–72 (KSGTNW) participates in 3'-phosphoadenylyl sulfate binding. Residues W95 and W100 each coordinate substrate. The active-site Proton acceptor is H122. 3'-phosphoadenylyl sulfate contacts are provided by residues R144, S152, Y207, 241 to 246 (SAFAAM), and 271 to 273 (RKG). The segment at 301–338 (VQRFPWDTSEEDSSPDGQPDPEPSPSPASDDPNPGSSQ) is disordered. A compositionally biased stretch (low complexity) spans 327 to 338 (PASDDPNPGSSQ).

The protein belongs to the sulfotransferase 1 family. In terms of tissue distribution, expressed at high levels in epididymis, intestine and uterus, and low levels in brain and hypothalamus. Isoform 2 is most prominent in the brain and spinal cord, with modest expression in the lung, skin and spleen. Isoform 1 is most prominently expressed in skin and small intestine, with modest expression in muscle and prostate.

It is found in the cytoplasm. Its subcellular location is the cytosol. The protein resides in the microsome. The protein localises to the nucleus. The catalysed reaction is an alcohol + 3'-phosphoadenylyl sulfate = an alkyl sulfate + adenosine 3',5'-bisphosphate + H(+). The enzyme catalyses pregnenolone + 3'-phosphoadenylyl sulfate = pregnenolone sulfate + adenosine 3',5'-bisphosphate + H(+). It catalyses the reaction 3beta-hydroxyandrost-5-en-17-one + 3'-phosphoadenylyl sulfate = dehydroepiandrosterone 3-sulfate + adenosine 3',5'-bisphosphate + H(+). It carries out the reaction cholesterol + 3'-phosphoadenylyl sulfate = cholesterol sulfate + adenosine 3',5'-bisphosphate + H(+). Sulfotransferase that utilizes 3'-phospho-5'-adenylyl sulfate (PAPS) as sulfonate donor to catalyze the sulfate conjugation. Preferentially sulfonates cholesterol. Catalyzes sulfation of the 3beta-hydroxyl groups of steroids, such as, pregnenolone and dehydroepiandrosterone (DHEA). Cholesterol sulfation is approximately 10-fold higher than for pregnenolone and 20-fold higher than for DHEA. Plays a role in epidermal cholesterol metabolism and in the regulation of epidermal proliferation and differentiation. Functionally, strongly sulfonates pregnenolone, however is capable to sulfonate cholesterol with a high degree of efficiency. DHEA is a relatively poor substrate. This is Sulfotransferase 2B1 (Sult2b1) from Mus musculus (Mouse).